Reading from the N-terminus, the 694-residue chain is MALTNTTITSWKLQEIVAHSSNVSSLVLGKSSGRLLATGGEDCRVNIWAVSKPNCIMSLTGHTSAVGCIQFNSSEERVVAGSLSGSLRLWDLEAAKILRTLMGHKASISSLDFHPMGEYLASGSVDSNIKLWDVRRKGCVFRYKGHTQAVRCLAFSPDGKWLASASDDSTVKLWDLIAGKMITEFTSHTSAVNVVQFHPNEYLLASGSADRTVKLWDLEKFNMIGSSEGETGVVRSVLFNPDGSCLYSGSENTLRVYGWEPDRCFDVVHVGWGKVSDLAISNNQMIAVSYSHTNVSWYVVDLNRVKKSGSVIQGLIQDKPIPAPSSALGTTLRRNYERPTTSCTGQEMKQSSEADRRSPEGERRSPSSEDEKEDKESSAEITNPEDYKEIFQPRSVISRTPPKTTEPFPAPLEHSFSESVLEKPGPVVKIVTPVIDRAGQLKGPITSSTPVQRVEPTVIAAAPRPVAVVTTSASSPSRPVVNTTKPKPSTGIILSTRNEPIGLNAGDFLSHARNAKASAMGDEEALAQIRKGHDTMCVMLSSRSKNLDSVRSVWASGDVKTSLDSAVSMNDLSIVVDVLNIINLKPSLWKLDLCTSILPQIEELLQSRYESYVQTGCMSLKLILKRFWPLISDTLNAPPSVGVDITREERHQKCKACYKQLKNLSNVVKNRAEQVGRHGSTFRELQLLMAPLDY.

WD repeat units follow at residues 18 to 58, 61 to 100, 103 to 142, 145 to 186, 188 to 226, and 229 to 269; these read AHSS…CIMS, GHTSAVGCIQFNSSEERVVAGSLSGSLRLWDLEAAKILRT, GHKASISSLDFHPMGEYLASGSVDSNIKLWDVRRKGCVFR, GHTQ…TEFT, HTSAVNVVQFHPNEYLLASGSADRTVKLWDLEKFNMIGS, and GETG…DVVH. Disordered regions lie at residues 319–410 and 470–492; these read KPIP…PFPA and TTSASSPSRPVVNTTKPKPSTGI. A compositionally biased stretch (polar residues) spans 327–349; the sequence is ALGTTLRRNYERPTTSCTGQEMK. Positions 350-378 are enriched in basic and acidic residues; the sequence is QSSEADRRSPEGERRSPSSEDEKEDKESS. Residues 470–481 show a composition bias toward low complexity; sequence TTSASSPSRPVV. Residues 482–492 are compositionally biased toward polar residues; sequence NTTKPKPSTGI.

It belongs to the WD repeat KATNB1 family. Interacts with katna1. This interaction enhances the microtubule binding and severing activity of katna1 and also targets this activity to the centrosome.

The protein localises to the cytoplasm. Its subcellular location is the cytoskeleton. The protein resides in the microtubule organizing center. It is found in the centrosome. It localises to the spindle pole. The protein localises to the spindle. Participates in a complex which severs microtubules in an ATP-dependent manner. May act to target the enzymatic subunit of this complex to sites of action such as the centrosome. Microtubule severing may promote rapid reorganization of cellular microtubule arrays and the release of microtubules from the centrosome following nucleation. The protein is Katanin p80 WD40 repeat-containing subunit B1 (katnb1) of Danio rerio (Zebrafish).